Consider the following 4017-residue polypeptide: Hybrid PKS-NRPS synthetase cghG (4017 aa).

The Ketosynthase family 3 (KS3) domain maps to Gln-6–Ser-438. Catalysis depends on for beta-ketoacyl synthase activity residues Cys-179, His-318, and His-358. Positions Val-549 to Leu-869 are malonyl-CoA:ACP transacylase (MAT) domain. An N-terminal hotdog fold region spans residues Asn-936–Pro-1072. The PKS/mFAS DH domain occupies Asn-936–Arg-1243. Residues Pro-937–Ala-1240 are dehydratase (DH) domain. The Proton acceptor; for dehydratase activity role is filled by His-969. The segment at Leu-1087–Arg-1243 is C-terminal hotdog fold. Asp-1147 (proton donor; for dehydratase activity) is an active-site residue. A methyltransferase (MT) domain region spans residues Val-1398–Lys-1585. The segment at Thr-2127–Xaa-2300 is ketoreductase (KR)domain. The Carrier 1 domain maps to Ala-2423–Ile-2499. Ser-2458 carries the post-translational modification O-(pantetheine 4'-phosphoryl)serine. Disordered regions lie at residues Val-2547–Arg-2606 and Trp-2613–His-2632. Residues Ser-2548–Thr-2578 show a composition bias toward polar residues. The tract at residues Arg-2626–Gln-3020 is condensation. The interval Glu-3053–Ile-3453 is adenylation. Residues Pro-3567–Thr-3586 form a disordered region. Over residues Thr-3569–Thr-3579 the composition is skewed to low complexity. Residues Gln-3583 to Gly-3661 enclose the Carrier 2 domain. The thiolation stretch occupies residues Thr-3588–Asp-3658. Ser-3621 bears the O-(pantetheine 4'-phosphoryl)serine mark. Residues Val-3696–Ala-3920 are reductase-like.

This sequence in the C-terminal section; belongs to the NRP synthetase family.

It catalyses the reaction (2S,4S)-4-hydroxy-4-methylglutamate + 8 malonyl-CoA + 3 S-adenosyl-L-methionine + ATP + 8 NADPH + 11 H(+) = (2S)-3-[(2S)-3,5-dioxo-4-[(2E,4R,6R,8E,10E,12E)-4,6,12-trimethyltetradeca-2,8,10,12-tetraenoyl]pyrrolidin-2-yl]-2-hydroxy-2-methylpropanoate + AMP + 3 S-adenosyl-L-homocysteine + 8 CO2 + diphosphate + 8 NADP(+) + 8 CoA + 6 H2O. It participates in secondary metabolite biosynthesis. Its function is as follows. Hybrid PKS-NRPS synthetase; part of the gene cluster that mediates the biosynthesis of the tetramic acid Sch210972, a potential anti-HIV fungal natural product that contains a decalin core. The PKS module of cghG together with the enoylreductase cghC catalyze the formation of the polyketide unit which is then conjugated to 4-hydroxyl-4-methyl glutamate (HMG) by the condensation domain of the cghG NRPS module. One unique structural feature of Sch210972 is the tetramic acid motif proposed to be derived from the non-proteinogenic amino acid HMG, by a Dieckmann-type condensation catalyzed by the reductase domain of cghG. The aldolase cghB catalyzes the aldol condensation of 2 molecules of pyruvic acid to yield the intermediate 4-hydroxyl-4-methyl-2-oxoglutarate (HMOG), which can then be stereoselectively transaminated by an unidentified enzyme to form HMG. The Diels-Alderase cghA then uses the Dieckmann product released by cghG as substrate and catalyzes the Diels-Alder cycloaddition to form the decalin ring of Sch210972. CghA also suppresses the nonenzymatic formation of the alternative stereoisomer. The polypeptide is Hybrid PKS-NRPS synthetase cghG (Chaetomium globosum (strain ATCC 6205 / CBS 148.51 / DSM 1962 / NBRC 6347 / NRRL 1970) (Soil fungus)).